The following is a 1347-amino-acid chain: Serine-aspartate repeat-containing protein D (1347 aa).

A signal peptide spans 1-35 (MLNRENKTAITRKGMVSNRLNKFSIRKYTVGTASI). Residues 23–34 (FSIRKYTVGTAS) carry the YSIRK-G/S signaling motif motif. Residues 36–568 (LVGTTLIFGL…NNQSGGAGQE (533 aa)) are ligand binding A region. The segment at 55–185 (STNKELNEAT…NKKVDAKTES (131 aa)) is disordered. Composition is skewed to polar residues over residues 62-71 (EATTSASDNQ) and 94-109 (EMVS…NGNK). The span at 130 to 145 (KSDEQASPKSTNEDLN) shows a compositional bias: basic and acidic residues. Composition is skewed to polar residues over residues 146–155 (TKQTISNQEA) and 163–173 (NKSVVNAQPTN). Positions 174–183 (EENKKVDAKT) are enriched in basic and acidic residues. CNA-B domains are found at residues 569 to 680 (VYKI…IYKP), 681 to 791 (KYNL…YKTP), 792 to 901 (KYNL…FYKP), 902 to 1012 (TYNL…YKTS), and 1013 to 1123 (KYSL…EEDT). Disordered stretches follow at residues 857–883 (ETPS…TSTT), 972–992 (YTPT…GLTT), and 1078–1323 (EKPA…SNNA). Polar residues-rich tracts occupy residues 860 to 869 (SGYTPTQVGS) and 972 to 981 (YTPTSVTSGN). Composition is skewed to acidic residues over residues 1091–1101 (TEDDKDADGGE) and 1118–1286 (YFEE…DSDS). Residues 1310–1314 (LPETG) carry the LPXTG sorting signal motif. Threonine 1313 is subject to Pentaglycyl murein peptidoglycan amidated threonine. The propeptide at 1314–1347 (GNENSGSNNATLFGGLFAALGSLLLFGRRKKQNK) is removed by sortase.

The protein belongs to the serine-aspartate repeat-containing protein (SDr) family. As to quaternary structure, interacts with host DSG1; this interaction increases S.aureus adherence to keratinocytes.

The protein localises to the secreted. Its subcellular location is the cell wall. In terms of biological role, cell surface-associated calcium-binding protein which plays an important role in adhesion and pathogenesis. Mediates interactions with components of the extracellular matrix such as host DSG1 to promote bacterial adhesion to host cells. Contributes to the resistance to killing by innate immune components such as neutrophils present in blood and thus attenuates bacterial clearance. In Staphylococcus aureus (strain MW2), this protein is Serine-aspartate repeat-containing protein D (sdrD).